The following is a 351-amino-acid chain: Type II restriction enzyme NmeDI (351 aa).

The enzyme catalyses Endonucleolytic cleavage of DNA to give specific double-stranded fragments with terminal 5'-phosphates.. Functionally, a P subtype restriction enzyme that recognizes the double-stranded sequence 5'-N(12)RCCGGYN(12)-3' and cleaves on both sides of the recognition sequence. In Neisseria meningitidis serogroup C, this protein is Type II restriction enzyme NmeDI (nmeDIRP).